The chain runs to 386 residues: uncharacterized protein (386 aa).

11 consecutive transmembrane segments (helical) span residues 3–23 (WFSLFILSIAIGGSFALLVAI), 42–62 (LVGHVDSALIVGLYAFLIFLW), 72–92 (FASFLPALLGFFMIAGSSLFG), 102–122 (VPTIIHPVFFGGVSLFFLGVF), 145–165 (ILSTTVINSFLMPLTYLIAYF), 183–203 (FGGHTHQFVNAGLLISLWLLL), 212–232 (WFLNLLLVVFPITYFFAQIFL), 244–264 (TWGYMVGIGIPTIVYGLITLV), 276–296 (ILVLSVSLYLLGALMGYMIVG), 308–328 (VIASILVGVIALTFMYLQELG), and 333–353 (LGKFEKFIPFSTVLVCFFLSS).

The protein to R.prowazekii RP382.

It localises to the cell membrane. This is an uncharacterized protein from Aquifex aeolicus (strain VF5).